The primary structure comprises 498 residues: Glycerol kinase (498 aa).

T12 serves as a coordination point for ADP. Positions 12, 13, and 14 each coordinate ATP. T12 contributes to the sn-glycerol 3-phosphate binding site. R16 lines the ADP pocket. Sn-glycerol 3-phosphate is bound by residues R82, E83, Y134, and D243. The glycerol site is built by R82, E83, Y134, D243, and Q244. ADP is bound by residues T265 and G308. ATP-binding residues include T265, G308, Q312, and G411. G411 contributes to the ADP binding site.

It belongs to the FGGY kinase family.

The enzyme catalyses glycerol + ATP = sn-glycerol 3-phosphate + ADP + H(+). It participates in polyol metabolism; glycerol degradation via glycerol kinase pathway; sn-glycerol 3-phosphate from glycerol: step 1/1. With respect to regulation, inhibited by fructose 1,6-bisphosphate (FBP). Its function is as follows. Key enzyme in the regulation of glycerol uptake and metabolism. Catalyzes the phosphorylation of glycerol to yield sn-glycerol 3-phosphate. The protein is Glycerol kinase of Brucella canis (strain ATCC 23365 / NCTC 10854 / RM-666).